A 470-amino-acid polypeptide reads, in one-letter code: Cysteine--tRNA ligase (470 aa).

Cys27 lines the Zn(2+) pocket. The 'HIGH' region motif lies at 29 to 39; the sequence is PTVYNHIHIGN. Zn(2+) is bound by residues Cys207, His232, and Glu236. The 'KMSKS' region motif lies at 265–269; the sequence is KMAKS. Position 268 (Lys268) interacts with ATP.

This sequence belongs to the class-I aminoacyl-tRNA synthetase family. As to quaternary structure, monomer. Zn(2+) serves as cofactor.

Its subcellular location is the cytoplasm. The catalysed reaction is tRNA(Cys) + L-cysteine + ATP = L-cysteinyl-tRNA(Cys) + AMP + diphosphate. In Rubrobacter xylanophilus (strain DSM 9941 / JCM 11954 / NBRC 16129 / PRD-1), this protein is Cysteine--tRNA ligase.